The sequence spans 299 residues: Bifunctional protein FolD (299 aa).

Residues Gly168 to Ser170, Ser193, and Ile234 contribute to the NADP(+) site.

It belongs to the tetrahydrofolate dehydrogenase/cyclohydrolase family. As to quaternary structure, homodimer.

It catalyses the reaction (6R)-5,10-methylene-5,6,7,8-tetrahydrofolate + NADP(+) = (6R)-5,10-methenyltetrahydrofolate + NADPH. It carries out the reaction (6R)-5,10-methenyltetrahydrofolate + H2O = (6R)-10-formyltetrahydrofolate + H(+). It functions in the pathway one-carbon metabolism; tetrahydrofolate interconversion. Its function is as follows. Catalyzes the oxidation of 5,10-methylenetetrahydrofolate to 5,10-methenyltetrahydrofolate and then the hydrolysis of 5,10-methenyltetrahydrofolate to 10-formyltetrahydrofolate. This is Bifunctional protein FolD from Bartonella henselae (strain ATCC 49882 / DSM 28221 / CCUG 30454 / Houston 1) (Rochalimaea henselae).